The following is an 862-amino-acid chain: DNA mismatch repair protein MutS (862 aa).

603-610 (GPNMSGKS) lines the ATP pocket.

It belongs to the DNA mismatch repair MutS family.

In terms of biological role, this protein is involved in the repair of mismatches in DNA. It is possible that it carries out the mismatch recognition step. This protein has a weak ATPase activity. In Bacillus velezensis (strain DSM 23117 / BGSC 10A6 / LMG 26770 / FZB42) (Bacillus amyloliquefaciens subsp. plantarum), this protein is DNA mismatch repair protein MutS.